Here is a 200-residue protein sequence, read N- to C-terminus: Translation machinery-associated protein 22 (200 aa).

The SUI1 domain occupies 106 to 177 (VQIKRVERNK…DVLEWLVEVH (72 aa)).

The protein belongs to the DENR family. Interacts with the 40S ribosomal subunit.

The protein resides in the cytoplasm. The polypeptide is Translation machinery-associated protein 22 (TMA22) (Coccidioides immitis (strain RS) (Valley fever fungus)).